A 150-amino-acid polypeptide reads, in one-letter code: 3-dehydroquinate dehydratase (150 aa).

Y26 functions as the Proton acceptor in the catalytic mechanism. Substrate-binding residues include N77, H83, and D90. H103 acts as the Proton donor in catalysis. Substrate-binding positions include 104-105 and R114; that span reads LS.

The protein belongs to the type-II 3-dehydroquinase family. In terms of assembly, homododecamer.

It carries out the reaction 3-dehydroquinate = 3-dehydroshikimate + H2O. Its pathway is metabolic intermediate biosynthesis; chorismate biosynthesis; chorismate from D-erythrose 4-phosphate and phosphoenolpyruvate: step 3/7. Its function is as follows. Catalyzes a trans-dehydration via an enolate intermediate. The sequence is that of 3-dehydroquinate dehydratase from Pseudoalteromonas translucida (strain TAC 125).